A 451-amino-acid polypeptide reads, in one-letter code: Glycine--tRNA ligase (451 aa).

Residues R99 and E168 each contribute to the substrate site. Residues 200–202 (RNE), 210–215 (FRTREF), 284–285 (EL), and 328–331 (GLDR) contribute to the ATP site. 215-219 (FEQME) is a substrate binding site. 324–328 (EPSVG) lines the substrate pocket.

This sequence belongs to the class-II aminoacyl-tRNA synthetase family. As to quaternary structure, homodimer.

It is found in the cytoplasm. The catalysed reaction is tRNA(Gly) + glycine + ATP = glycyl-tRNA(Gly) + AMP + diphosphate. Its function is as follows. Catalyzes the attachment of glycine to tRNA(Gly). The polypeptide is Glycine--tRNA ligase (Mycoplasmopsis synoviae (strain 53) (Mycoplasma synoviae)).